Reading from the N-terminus, the 498-residue chain is Glycerol kinase (498 aa).

T14 contacts ADP. Residues T14, T15, and S16 each contribute to the ATP site. A sn-glycerol 3-phosphate-binding site is contributed by T14. R18 contacts ADP. 4 residues coordinate sn-glycerol 3-phosphate: R84, E85, Y136, and D245. Residues R84, E85, Y136, D245, and Q246 each coordinate glycerol. ADP is bound by residues T267 and G310. 4 residues coordinate ATP: T267, G310, Q314, and G410. ADP contacts are provided by G410 and N414.

This sequence belongs to the FGGY kinase family.

It carries out the reaction glycerol + ATP = sn-glycerol 3-phosphate + ADP + H(+). It functions in the pathway polyol metabolism; glycerol degradation via glycerol kinase pathway; sn-glycerol 3-phosphate from glycerol: step 1/1. With respect to regulation, inhibited by fructose 1,6-bisphosphate (FBP). Key enzyme in the regulation of glycerol uptake and metabolism. Catalyzes the phosphorylation of glycerol to yield sn-glycerol 3-phosphate. In Rhodospirillum centenum (strain ATCC 51521 / SW), this protein is Glycerol kinase.